Consider the following 89-residue polypeptide: Small ribosomal subunit protein uS15 (89 aa).

Positions 1-21 (MSITPERKQEMIKDYATKEGD) are enriched in basic and acidic residues. Residues 1–23 (MSITPERKQEMIKDYATKEGDTG) are disordered.

Belongs to the universal ribosomal protein uS15 family. In terms of assembly, part of the 30S ribosomal subunit. Forms a bridge to the 50S subunit in the 70S ribosome, contacting the 23S rRNA.

Functionally, one of the primary rRNA binding proteins, it binds directly to 16S rRNA where it helps nucleate assembly of the platform of the 30S subunit by binding and bridging several RNA helices of the 16S rRNA. Forms an intersubunit bridge (bridge B4) with the 23S rRNA of the 50S subunit in the ribosome. This chain is Small ribosomal subunit protein uS15, found in Rhodospirillum rubrum (strain ATCC 11170 / ATH 1.1.1 / DSM 467 / LMG 4362 / NCIMB 8255 / S1).